The primary structure comprises 126 residues: Small ribosomal subunit protein uS13 (126 aa).

The segment at His92–Lys126 is disordered.

Belongs to the universal ribosomal protein uS13 family. Part of the 30S ribosomal subunit. Forms a loose heterodimer with protein S19. Forms two bridges to the 50S subunit in the 70S ribosome.

Functionally, located at the top of the head of the 30S subunit, it contacts several helices of the 16S rRNA. In the 70S ribosome it contacts the 23S rRNA (bridge B1a) and protein L5 of the 50S subunit (bridge B1b), connecting the 2 subunits; these bridges are implicated in subunit movement. Contacts the tRNAs in the A and P-sites. The protein is Small ribosomal subunit protein uS13 of Kineococcus radiotolerans (strain ATCC BAA-149 / DSM 14245 / SRS30216).